The primary structure comprises 386 residues: L-prolyl-[peptidyl-carrier protein] dehydrogenase (386 aa).

Residues 125 to 134 (NAATEPDAGS) and 158 to 160 (FIT) each bind FAD. Glu244 functions as the Proton acceptor in the catalytic mechanism. Residues Arg270, Gln281, 338 to 342 (QTFGG), and 367 to 369 (TND) each bind FAD.

Belongs to the acyl-CoA dehydrogenase family. FAD is required as a cofactor.

It carries out the reaction L-prolyl-[peptidyl-carrier protein] + 2 oxidized [electron-transfer flavoprotein] + H(+) = (1H-pyrrole-2-carbonyl)-[peptidyl-carrier protein] + 2 reduced [electron-transfer flavoprotein]. The protein operates within antibiotic biosynthesis; prodigiosin biosynthesis. In terms of biological role, involved in the biosynthesis of 4-methoxy-2,2'-bipyrrole-5-carbaldehyde (MBC), one of the terminal products involved in the biosynthesis of the red antibiotic prodigiosin (Pig). Catalyzes the desaturation of the L-prolyl-[PigG] to yield 1H-pyrrole-2-carbonyl-[PigG]. The polypeptide is L-prolyl-[peptidyl-carrier protein] dehydrogenase (Serratia sp. (strain ATCC 39006) (Prodigiosinella confusarubida)).